Here is a 320-residue protein sequence, read N- to C-terminus: Nicotianamine synthase 3 (320 aa).

Belongs to the nicotianamine synthase (NAS)-like family. As to expression, in shoots.

The enzyme catalyses 3 S-adenosyl-L-methionine = nicotianamine + 3 S-methyl-5'-thioadenosine + 3 H(+). In terms of biological role, synthesizes nicotianamine, a polyamine which serves as a sensor for the physiological iron status within the plant, and/or might be involved in the transport of iron. The polypeptide is Nicotianamine synthase 3 (NAS3) (Arabidopsis thaliana (Mouse-ear cress)).